The sequence spans 189 residues: GTP cyclohydrolase 1 (189 aa).

Residues C78, H81, and C150 each contribute to the Zn(2+) site.

It belongs to the GTP cyclohydrolase I family. Toroid-shaped homodecamer, composed of two pentamers of five dimers.

It carries out the reaction GTP + H2O = 7,8-dihydroneopterin 3'-triphosphate + formate + H(+). Its pathway is cofactor biosynthesis; 7,8-dihydroneopterin triphosphate biosynthesis; 7,8-dihydroneopterin triphosphate from GTP: step 1/1. This chain is GTP cyclohydrolase 1, found in Listeria monocytogenes serovar 1/2a (strain ATCC BAA-679 / EGD-e).